A 503-amino-acid polypeptide reads, in one-letter code: Cytochrome P450 monooxygenase ecdH (503 aa).

A helical membrane pass occupies residues 8 to 24; the sequence is TTLLCGVISSTLLLLLL. 3 N-linked (GlcNAc...) asparagine glycosylation sites follow: asparagine 64, asparagine 324, and asparagine 413. Cysteine 449 is a binding site for heme.

This sequence belongs to the cytochrome P450 family. Heme is required as a cofactor.

It localises to the membrane. It functions in the pathway antifungal biosynthesis. Its function is as follows. Cytochrome P450 monooxygenase; part of the gene cluster that mediates the biosynthesis of echinocandin B, a fungal lipidated cyclic hexapeptide that acts as an antifungal agent. Linoleoyl-AMP, produced by the fatty-acyl-AMP ligase ecdI, is transferred to the initiation carrier domain (T0) of ecdA. The linoleoyl-S-phosphopantetheinyl-T0 is sequentially extended with L-ornithine, L-threonine, L-proline, L-homotyrosine, L-threonine, and 4R-methyl-L-proline to form the linear hexapeptide. Thereafter, the terminal condensation (C7) performs macrocyclization of the NRPS product and the cyclic scaffold is released from ecdA. All six of the amino acid residues are hydroxylated, including 4R,5R-dihydroxy-L-ornithine, 4R-hydroxyl-L-proline, 3S,4S-dihydroxy-L-homotyrosine, and 3S-hydroxyl-4S-methyl-L-prolin. In the pathway, all the hydroxylation reactions are proposed to occur following completion of the cyclic peptide, so the unhydroxylated precursor produced by ecdA will undergo six rounds of hydroxylation. Five hydroxylase genes (ecdG, ecdH, ecdK, htyE and htyF) are embedded within the echinocandin B (ecd) and L-homotyrosine (hty) clusters. This is Cytochrome P450 monooxygenase ecdH from Aspergillus rugulosus (Emericella rugulosa).